The chain runs to 950 residues: Bifunctional glutamine synthetase adenylyltransferase/adenylyl-removing enzyme (950 aa).

An adenylyl removase region spans residues 1–443 (MSLPSPLIPV…VFVTLIGDEE (443 aa)). Positions 450 to 950 (ERHFNELWDM…WQEWLESSTI (501 aa)) are adenylyl transferase.

Belongs to the GlnE family. The cofactor is Mg(2+).

The catalysed reaction is [glutamine synthetase]-O(4)-(5'-adenylyl)-L-tyrosine + phosphate = [glutamine synthetase]-L-tyrosine + ADP. It carries out the reaction [glutamine synthetase]-L-tyrosine + ATP = [glutamine synthetase]-O(4)-(5'-adenylyl)-L-tyrosine + diphosphate. Involved in the regulation of glutamine synthetase GlnA, a key enzyme in the process to assimilate ammonia. When cellular nitrogen levels are high, the C-terminal adenylyl transferase (AT) inactivates GlnA by covalent transfer of an adenylyl group from ATP to specific tyrosine residue of GlnA, thus reducing its activity. Conversely, when nitrogen levels are low, the N-terminal adenylyl removase (AR) activates GlnA by removing the adenylyl group by phosphorolysis, increasing its activity. The regulatory region of GlnE binds the signal transduction protein PII (GlnB) which indicates the nitrogen status of the cell. The protein is Bifunctional glutamine synthetase adenylyltransferase/adenylyl-removing enzyme of Vibrio vulnificus (strain CMCP6).